The sequence spans 671 residues: Putative glycoside hydrolase BT_3595 (671 aa).

The first 24 residues, 1–24 (MITGIISILCYLQCFGTLSASVTA), serve as a signal peptide directing secretion.

The protein belongs to the glycoside hydrolase-like 3 (GHL3) family.

The sequence is that of Putative glycoside hydrolase BT_3595 from Bacteroides thetaiotaomicron (strain ATCC 29148 / DSM 2079 / JCM 5827 / CCUG 10774 / NCTC 10582 / VPI-5482 / E50).